The following is a 347-amino-acid chain: Protein RecA (347 aa).

Residue 65 to 72 (GPESSGKT) participates in ATP binding. Residues 327 to 336 (KFEPTELSRE) show a composition bias toward basic and acidic residues. Residues 327–347 (KFEPTELSREEGDEDTLEDAM) are disordered. Over residues 337–347 (EGDEDTLEDAM) the composition is skewed to acidic residues.

This sequence belongs to the RecA family.

It localises to the cytoplasm. Functionally, can catalyze the hydrolysis of ATP in the presence of single-stranded DNA, the ATP-dependent uptake of single-stranded DNA by duplex DNA, and the ATP-dependent hybridization of homologous single-stranded DNAs. It interacts with LexA causing its activation and leading to its autocatalytic cleavage. The polypeptide is Protein RecA (Xylella fastidiosa (strain M12)).